Reading from the N-terminus, the 193-residue chain is dCTP deaminase (193 aa).

DCTP is bound by residues 110–115, aspartate 128, 136–138, tyrosine 171, lysine 178, and glutamine 182; these read RSSLAR and VLE. Residue glutamate 138 is the Proton donor/acceptor of the active site. The tract at residues 169–193 is disordered; sequence RPYNRRQDAKYRDQQGAVASRIDKD.

It belongs to the dCTP deaminase family. Homotrimer.

It catalyses the reaction dCTP + H2O + H(+) = dUTP + NH4(+). Its pathway is pyrimidine metabolism; dUMP biosynthesis; dUMP from dCTP (dUTP route): step 1/2. In terms of biological role, catalyzes the deamination of dCTP to dUTP. The polypeptide is dCTP deaminase (Cronobacter sakazakii (strain ATCC BAA-894) (Enterobacter sakazakii)).